The sequence spans 3068 residues: Genome polyprotein (3068 aa).

Positions 144-287 constitute a Peptidase S30 domain; it reads TFRDGHMNKF…MATVTHMEQY (144 aa). Active-site for P1 proteinase activity residues include histidine 195, aspartate 204, and serine 238. The Involved in interaction with stylet and aphid transmission signature appears at 337–340; it reads KLTC. An Involved in virions binding and aphid transmission motif is present at residues 595–597; it reads PTK. The region spanning 621–743 is the Peptidase C6 domain; the sequence is LYIALDGYCY…ESEIKHYRVG (123 aa). Residues cysteine 629 and histidine 702 each act as for helper component proteinase activity in the active site. Residues 1228-1380 enclose the Helicase ATP-binding domain; sequence DISISSERDF…TQFPVKLVVE (153 aa). 1241–1248 contributes to the ATP binding site; sequence GAVGSGKS. The short motif at 1330 to 1333 is the DECH box element; the sequence is DECH. The region spanning 1399-1558 is the Helicase C-terminal domain; that stretch reads DMIQYGNNLL…NLPVMSSGVS (160 aa). The Nuclear localization signal signature appears at 1884–1891; the sequence is KKGKGKGT. Tyrosine 1906 carries the post-translational modification O-(5'-phospho-RNA)-tyrosine. In terms of domain architecture, Peptidase C4 spans 2031 to 2249; that stretch reads AKTLMRGLRD…VLWGPLQLTK (219 aa). Residues histidine 2076, aspartate 2111, and cysteine 2181 each act as for nuclear inclusion protein A activity in the active site. The region spanning 2518-2642 is the RdRp catalytic domain; that stretch reads WIYCDADGSQ…AVNPERESLL (125 aa). A disordered region spans residues 2796–2833; it reads SSSRSDTLDAGEEKKKNKEVATVSDGMGKKEVESTRDS. Basic and acidic residues predominate over residues 2822-2833; the sequence is MGKKEVESTRDS. Threonine 3051 is modified (phosphothreonine).

The protein belongs to the potyviridae genome polyprotein family. As to quaternary structure, interacts with host eIF4E protein (via cap-binding region); this interaction mediates the translation of the VPg-viral RNA conjugates. Part of a complex that comprises VPg, RNA, host EIF4E and EIF4G; this interaction mediates the translation of the VPg-viral RNA conjugates. Post-translationally, VPg is uridylylated by the polymerase and is covalently attached to the 5'-end of the genomic RNA. This uridylylated form acts as a nucleotide-peptide primer for the polymerase. In terms of processing, potyviral RNA is expressed as two polyproteins which undergo post-translational proteolytic processing. Genome polyprotein is processed by NIa-pro, P1 and HC-pro proteinases resulting in the production of at least ten individual proteins. P3N-PIPO polyprotein is cleaved by P1 and HC-pro proteinases resulting in the production of three individual proteins. The P1 proteinase and the HC-pro cleave only their respective C-termini autocatalytically. 6K1 is essential for proper proteolytic separation of P3 from CI.

The protein localises to the host cytoplasmic vesicle. The protein resides in the host nucleus. Its subcellular location is the virion. It carries out the reaction RNA(n) + a ribonucleoside 5'-triphosphate = RNA(n+1) + diphosphate. The enzyme catalyses Hydrolyzes glutaminyl bonds, and activity is further restricted by preferences for the amino acids in P6 - P1' that vary with the species of potyvirus, e.g. Glu-Xaa-Xaa-Tyr-Xaa-Gln-|-(Ser or Gly) for the enzyme from tobacco etch virus. The natural substrate is the viral polyprotein, but other proteins and oligopeptides containing the appropriate consensus sequence are also cleaved.. The catalysed reaction is Hydrolyzes a Gly-|-Gly bond at its own C-terminus, commonly in the sequence -Tyr-Xaa-Val-Gly-|-Gly, in the processing of the potyviral polyprotein.. Required for aphid transmission and also has proteolytic activity. Only cleaves a Gly-Gly dipeptide at its own C-terminus. Interacts with virions and aphid stylets. Acts as a suppressor of RNA-mediated gene silencing, also known as post-transcriptional gene silencing (PTGS), a mechanism of plant viral defense that limits the accumulation of viral RNAs. May have RNA-binding activity. Its function is as follows. Has helicase activity. It may be involved in replication. Functionally, indispensable for virus replication. Reduces the abundance of host transcripts related to jasmonic acid biosynthesis therefore altering the host defenses. In order to increase its own stability, decreases host protein degradation pathways. In terms of biological role, indispensable for virus replication. Mediates the cap-independent, EIF4E-dependent translation of viral genomic RNAs. Binds to the cap-binding site of host EIF4E and thus interferes with the host EIF4E-dependent mRNA export and translation. VPg-RNA directly binds EIF4E and is a template for transcription. Also forms trimeric complexes with EIF4E-EIF4G, which are templates for translation. Its function is as follows. Has RNA-binding and proteolytic activities. Functionally, an RNA-dependent RNA polymerase that plays an essential role in the virus replication. In terms of biological role, involved in aphid transmission, cell-to-cell and systemis movement, encapsidation of the viral RNA and in the regulation of viral RNA amplification. The chain is Genome polyprotein from Pepper mottle virus (isolate California) (PeMV).